Here is a 316-residue protein sequence, read N- to C-terminus: tRNA dimethylallyltransferase (316 aa).

Residue 17–24 (GPTASGKT) participates in ATP binding. 19–24 (TASGKT) lines the substrate pocket. Interaction with substrate tRNA stretches follow at residues 42–45 (DSAL), 166–170 (QRLSR), and 247–252 (RCVGYR).

This sequence belongs to the IPP transferase family. As to quaternary structure, monomer. Mg(2+) is required as a cofactor.

The enzyme catalyses adenosine(37) in tRNA + dimethylallyl diphosphate = N(6)-dimethylallyladenosine(37) in tRNA + diphosphate. Its function is as follows. Catalyzes the transfer of a dimethylallyl group onto the adenine at position 37 in tRNAs that read codons beginning with uridine, leading to the formation of N6-(dimethylallyl)adenosine (i(6)A). This chain is tRNA dimethylallyltransferase, found in Salmonella paratyphi C (strain RKS4594).